Consider the following 70-residue polypeptide: SPbeta prophage-derived uncharacterized protein YotJ (70 aa).

The protein is SPbeta prophage-derived uncharacterized protein YotJ (yotJ) of Bacillus subtilis (strain 168).